The sequence spans 223 residues: 2-C-methyl-D-erythritol 4-phosphate cytidylyltransferase (223 aa).

Belongs to the IspD/TarI cytidylyltransferase family. IspD subfamily.

It carries out the reaction 2-C-methyl-D-erythritol 4-phosphate + CTP + H(+) = 4-CDP-2-C-methyl-D-erythritol + diphosphate. It participates in isoprenoid biosynthesis; isopentenyl diphosphate biosynthesis via DXP pathway; isopentenyl diphosphate from 1-deoxy-D-xylulose 5-phosphate: step 2/6. In terms of biological role, catalyzes the formation of 4-diphosphocytidyl-2-C-methyl-D-erythritol from CTP and 2-C-methyl-D-erythritol 4-phosphate (MEP). In Prochlorococcus marinus subsp. pastoris (strain CCMP1986 / NIES-2087 / MED4), this protein is 2-C-methyl-D-erythritol 4-phosphate cytidylyltransferase.